A 289-amino-acid polypeptide reads, in one-letter code: Aquaporin PIP2-3 (289 aa).

The disordered stretch occupies residues 1–25 (MAKQDIEASGPEAGEFSAKDYTDPP). The next 2 membrane-spanning stretches (helical) occupy residues 43 to 63 (AVIA…ATVI) and 80 to 100 (CGGV…FILV). Residues 112–114 (NPA) carry the NPA 1 motif. The next 3 helical transmembrane spans lie at 131 to 151 (LLYI…VKGF), 173 to 193 (GTGL…VFSA), and 207 to 227 (VLAP…TIPI). Residues 233-235 (NPA) carry the NPA 2 motif. Residues 255–275 (IFWVGPLIGAAIAAAYHQYVL) traverse the membrane as a helical segment.

The protein belongs to the MIP/aquaporin (TC 1.A.8) family. PIP (TC 1.A.8.11) subfamily.

The protein localises to the cell membrane. Aquaporins facilitate the transport of water and small neutral solutes across cell membranes. The sequence is that of Aquaporin PIP2-3 (PIP2-3) from Zea mays (Maize).